Here is a 174-residue protein sequence, read N- to C-terminus: Probable carboxylesterase Culp5 (174 aa).

Ser67 functions as the Nucleophile in the catalytic mechanism. Cys137 and Cys144 are oxidised to a cystine. The active site involves Asp141. The active-site Proton donor/acceptor is the His153.

The protein belongs to the cutinase family.

In terms of biological role, does not exhibit cutinase activity. This chain is Probable carboxylesterase Culp5, found in Mycobacterium tuberculosis (strain ATCC 25618 / H37Rv).